A 1188-amino-acid polypeptide reads, in one-letter code: MAGHDVQYGKHRTRRSFSRIKEVLDLPNLIEIQTDSFKDFLDHGLKEVFEDVLPISNFTDTMELEFVGYEIREPKYTLEEARIHDASYSAPIFVTFRLINKETGEIKTQEVFFGDFPIMTEMGTFIINGGERIIVSQLVRSPGVYFNDKVDKNGKIGYGSTVIPNRGAWLELETDSKDIAYTRIDRTRKIPFTTLVRALGFSGDDEIFDIFGDSDLVRNTIEKDIHKNPMDSRTDEALKEIYERLRPGEPKTAESSRSLLVARFFDPHRYDLAAVGRYKINKKLNIKTRLLNQTIAEPLVDAETGEILVEAGTLMTRSVIDSIAEQLDNGLNKITYIPNDSAVLTEPVELQKFKVVAPTDPDRVVTIIGNANPSDKVRTVTPADILAEMSYFLNLAEGIGRVDDIDHLGNRRIRAVGELLANQVRLGLSRMERNVRERMSVQDNEVLTPQQIINIRPVTAAIKEFFGSSQLSQFMDQHNPLSELSHKRRLSALGPGGLTRDRAGYEVRDVHYTHYGRMCPIETPEGPNIGLINNLSSYGHLNKYGFIQTPYRKVDREAGVVTNEIVWLTADEEDEFIVAQANSKLNEEGGFAEPIVMGRHQGNNQEFPSDQVDYMDVSPKQVVAVATACIPFLENDDSNRALMGANMQRQAVPLIDPKAPYVGTGMEYQAAHDSGAAVIAQHDGKVTYADADKVEVRREDGSLDVYHIQKFRRSNSGTAYNQRTLVKVGDVVEKGDFIADGPSMENGEMALGQNPIVAYMTWEGYNFEDAVIMSERLVKDDVYTSVHLEEYESETRDTKLGPEEITREIPNVGEDALRNLDEMGIIRIGAEVKEGDILVGKVTPKGEKDLSAEERLLHAIFGDKSREVRDTSLRVPHGADGVVRDVKIFTRANGDELQSGVNMLVRVYIAQKRKIKVGDKMAGRHGNKGVVSRIVPVEDMPYLPDGTPVDIMLNPLGVPSRMNIGQVMELHLGMAARNLGIHIATPVFDGASSDDLWDTVREAGMDSDAKTVLYDGRTGEPFDNRVSVGVMYMIKLHHMVDDKLHARSVGPYSMVTQQPLGGKAQFGGQRFGEMEVWALEAYGASNVLQEILTYKSDDVNGRLKAYEAITKGKPIPKPGVPESFRVLVKELQSLGLDMRVLDEDDNEVELRDLDEGEDDDVIHVDDLEKAREKAAQEAKAAFEAEGKE.

The protein belongs to the RNA polymerase beta chain family. As to quaternary structure, the RNAP catalytic core consists of 2 alpha, 1 beta, 1 beta' and 1 omega subunit. When a sigma factor is associated with the core the holoenzyme is formed, which can initiate transcription.

It catalyses the reaction RNA(n) + a ribonucleoside 5'-triphosphate = RNA(n+1) + diphosphate. DNA-dependent RNA polymerase catalyzes the transcription of DNA into RNA using the four ribonucleoside triphosphates as substrates. The polypeptide is DNA-directed RNA polymerase subunit beta (Streptococcus gordonii (strain Challis / ATCC 35105 / BCRC 15272 / CH1 / DL1 / V288)).